The following is a 379-amino-acid chain: Dual-specificity RNA methyltransferase RlmN (379 aa).

Catalysis depends on glutamate 90, which acts as the Proton acceptor. The Radical SAM core domain occupies 96–348 (EPNRGTLCVS…TTVRKTRGDD (253 aa)). Cysteine 103 and cysteine 353 are disulfide-bonded. Residues cysteine 110, cysteine 114, and cysteine 117 each coordinate [4Fe-4S] cluster. Residues 179-180 (GE), serine 211, 233-235 (SLH), and asparagine 310 contribute to the S-adenosyl-L-methionine site. Catalysis depends on cysteine 353, which acts as the S-methylcysteine intermediate.

This sequence belongs to the radical SAM superfamily. RlmN family. Requires [4Fe-4S] cluster as cofactor.

The protein localises to the cytoplasm. It carries out the reaction adenosine(2503) in 23S rRNA + 2 reduced [2Fe-2S]-[ferredoxin] + 2 S-adenosyl-L-methionine = 2-methyladenosine(2503) in 23S rRNA + 5'-deoxyadenosine + L-methionine + 2 oxidized [2Fe-2S]-[ferredoxin] + S-adenosyl-L-homocysteine. It catalyses the reaction adenosine(37) in tRNA + 2 reduced [2Fe-2S]-[ferredoxin] + 2 S-adenosyl-L-methionine = 2-methyladenosine(37) in tRNA + 5'-deoxyadenosine + L-methionine + 2 oxidized [2Fe-2S]-[ferredoxin] + S-adenosyl-L-homocysteine. Functionally, specifically methylates position 2 of adenine 2503 in 23S rRNA and position 2 of adenine 37 in tRNAs. m2A2503 modification seems to play a crucial role in the proofreading step occurring at the peptidyl transferase center and thus would serve to optimize ribosomal fidelity. The polypeptide is Dual-specificity RNA methyltransferase RlmN (Nitrosomonas eutropha (strain DSM 101675 / C91 / Nm57)).